The chain runs to 957 residues: ERC protein 2 (957 aa).

Positions Met-1–Gly-13 are enriched in polar residues. The disordered stretch occupies residues Met-1 to Leu-44. The segment covering Ser-14 to Pro-25 has biased composition (low complexity). A phosphoserine mark is found at Ser-65 and Ser-666. Residues Arg-140–Asp-917 are a coiled coil. A compositionally biased stretch (basic residues) spans His-922–His-943. The disordered stretch occupies residues His-922–Ala-957. Acidic residues predominate over residues Asp-948–Ala-957.

As to quaternary structure, interacts with BSN, ERC1, PPFIA1, PPFIA2, PPFIA3 and PPFIA4. Interacts through its C-terminus with the PDZ domain of RIMS1. Part of a complex consisting of ERC2, RIMS1 and UNC13A. As to expression, expressed throughout the central nervous system, including hippocampus, cortex, cerebellum and olfactory bulb.

It is found in the cytoplasm. The protein resides in the synapse. The protein localises to the presynaptic active zone. Its subcellular location is the cytoskeleton. Its function is as follows. Thought to be involved in the organization of the cytomatrix at the nerve terminals active zone (CAZ) which regulates neurotransmitter release. Seems to act together with BSN. May recruit liprin-alpha proteins to the CAZ. This is ERC protein 2 (Erc2) from Mus musculus (Mouse).